The chain runs to 341 residues: Putative amino-acid ABC transporter-binding protein YhdW (341 aa).

The signal sequence occupies residues Met1–Ala19.

This sequence belongs to the bacterial solute-binding protein 3 family.

It localises to the periplasm. Its function is as follows. Probably part of the binding-protein-dependent transport system YdhWXYZ for an amino acid. In Escherichia coli O157:H7, this protein is Putative amino-acid ABC transporter-binding protein YhdW (yhdW).